The chain runs to 973 residues: Protein HypA (973 aa).

The protein is Protein HypA (hypA) of Clostridium perfringens (strain 13 / Type A).